Reading from the N-terminus, the 358-residue chain is Probable branched-chain-amino-acid aminotransferase (358 aa).

Position 196 is an N6-(pyridoxal phosphate)lysine (lysine 196).

The protein belongs to the class-IV pyridoxal-phosphate-dependent aminotransferase family. It depends on pyridoxal 5'-phosphate as a cofactor.

It carries out the reaction L-leucine + 2-oxoglutarate = 4-methyl-2-oxopentanoate + L-glutamate. The catalysed reaction is L-isoleucine + 2-oxoglutarate = (S)-3-methyl-2-oxopentanoate + L-glutamate. The enzyme catalyses L-valine + 2-oxoglutarate = 3-methyl-2-oxobutanoate + L-glutamate. It participates in amino-acid biosynthesis; L-isoleucine biosynthesis; L-isoleucine from 2-oxobutanoate: step 4/4. It functions in the pathway amino-acid biosynthesis; L-leucine biosynthesis; L-leucine from 3-methyl-2-oxobutanoate: step 4/4. Its pathway is amino-acid biosynthesis; L-valine biosynthesis; L-valine from pyruvate: step 4/4. In terms of biological role, acts on leucine, isoleucine and valine. The protein is Probable branched-chain-amino-acid aminotransferase (ilvE) of Staphylococcus epidermidis (strain ATCC 12228 / FDA PCI 1200).